A 93-amino-acid chain; its full sequence is MADRVRARIVVSGRVQGVAFRQSAADEGRRLGVKGWVRNLPDGRVEAEVEGERAAVGALVRWCHAGPPAARVDGVEVEWVDPAGDLGAFEIRF.

The 88-residue stretch at 6-93 folds into the Acylphosphatase-like domain; the sequence is RARIVVSGRV…GDLGAFEIRF (88 aa). Active-site residues include Arg-21 and Asn-39.

This sequence belongs to the acylphosphatase family.

The catalysed reaction is an acyl phosphate + H2O = a carboxylate + phosphate + H(+). This chain is Acylphosphatase (acyP), found in Anaeromyxobacter dehalogenans (strain 2CP-C).